Reading from the N-terminus, the 413-residue chain is Serine hydroxymethyltransferase (413 aa).

(6S)-5,6,7,8-tetrahydrofolate is bound by residues Leu119 and 123 to 125 (GHL). Lys228 is subject to N6-(pyridoxal phosphate)lysine. 351-353 (SPF) provides a ligand contact to (6S)-5,6,7,8-tetrahydrofolate.

This sequence belongs to the SHMT family. As to quaternary structure, homodimer. It depends on pyridoxal 5'-phosphate as a cofactor.

It is found in the cytoplasm. It catalyses the reaction (6R)-5,10-methylene-5,6,7,8-tetrahydrofolate + glycine + H2O = (6S)-5,6,7,8-tetrahydrofolate + L-serine. It participates in one-carbon metabolism; tetrahydrofolate interconversion. The protein operates within amino-acid biosynthesis; glycine biosynthesis; glycine from L-serine: step 1/1. Its function is as follows. Catalyzes the reversible interconversion of serine and glycine with tetrahydrofolate (THF) serving as the one-carbon carrier. This reaction serves as the major source of one-carbon groups required for the biosynthesis of purines, thymidylate, methionine, and other important biomolecules. Also exhibits THF-independent aldolase activity toward beta-hydroxyamino acids, producing glycine and aldehydes, via a retro-aldol mechanism. The chain is Serine hydroxymethyltransferase from Clostridium botulinum (strain ATCC 19397 / Type A).